The sequence spans 184 residues: Bifunctional protein PyrR (184 aa).

Residues 98 to 110 carry the PRPP-binding motif; the sequence is VVLVDDVLYTGRT.

Belongs to the purine/pyrimidine phosphoribosyltransferase family. PyrR subfamily.

It catalyses the reaction UMP + diphosphate = 5-phospho-alpha-D-ribose 1-diphosphate + uracil. Functionally, regulates the transcription of the pyrimidine nucleotide (pyr) operon in response to exogenous pyrimidines. Its function is as follows. Also displays a weak uracil phosphoribosyltransferase activity which is not physiologically significant. The polypeptide is Bifunctional protein PyrR (Roseiflexus castenholzii (strain DSM 13941 / HLO8)).